The primary structure comprises 245 residues: 6-carboxyhexanoate--CoA ligase (245 aa).

Belongs to the BioW family. In terms of assembly, homodimer. The cofactor is Mg(2+).

It catalyses the reaction heptanedioate + ATP + CoA = 6-carboxyhexanoyl-CoA + AMP + diphosphate. The protein operates within metabolic intermediate metabolism; pimeloyl-CoA biosynthesis; pimeloyl-CoA from pimelate: step 1/1. Its function is as follows. Catalyzes the transformation of pimelate into pimeloyl-CoA with concomitant hydrolysis of ATP to AMP. This chain is 6-carboxyhexanoate--CoA ligase, found in Thermodesulfovibrio yellowstonii (strain ATCC 51303 / DSM 11347 / YP87).